Consider the following 637-residue polypeptide: Probable potassium transport system protein Kup (637 aa).

A run of 12 helical transmembrane segments spans residues 24-44 (LAIA…LYAL), 64-84 (VISL…LLFV), 113-133 (AGAL…DAVI), 151-171 (PHLS…LFWI), 182-202 (LFGP…VYHI), 225-245 (LLQA…AEAL), 261-281 (AYGL…ALLI), 290-310 (PFFL…STVA), 351-371 (IYVP…VIGF), 381-401 (YGIA…VVMV), 409-429 (LLVG…FGAN), and 433-453 (VAQG…LLMT).

Belongs to the HAK/KUP transporter (TC 2.A.72) family.

It localises to the cell inner membrane. The catalysed reaction is K(+)(in) + H(+)(in) = K(+)(out) + H(+)(out). Functionally, transport of potassium into the cell. Likely operates as a K(+):H(+) symporter. The sequence is that of Probable potassium transport system protein Kup from Burkholderia ambifaria (strain ATCC BAA-244 / DSM 16087 / CCUG 44356 / LMG 19182 / AMMD) (Burkholderia cepacia (strain AMMD)).